The chain runs to 463 residues: Chaperone SurA (463 aa).

The N-terminal stretch at 1–25 is a signal peptide; it reads MTKPFSVVLASLLAITSTISPLASA. PpiC domains follow at residues 174–276 and 289–388; these read GSKY…KLME and VTEY…QRVG. 2 disordered regions span residues 329 to 348 and 434 to 463; these read ATAK…GDLG and GDRA…KPTR. A compositionally biased stretch (low complexity) spans 439–452; that stretch reads NNATAAPAKSADPA. The span at 453–463 shows a compositional bias: pro residues; it reads LPAPPPAKPTR.

The protein localises to the periplasm. It catalyses the reaction [protein]-peptidylproline (omega=180) = [protein]-peptidylproline (omega=0). Its function is as follows. Chaperone involved in the correct folding and assembly of outer membrane proteins. Recognizes specific patterns of aromatic residues and the orientation of their side chains, which are found more frequently in integral outer membrane proteins. May act in both early periplasmic and late outer membrane-associated steps of protein maturation. The sequence is that of Chaperone SurA from Xanthomonas oryzae pv. oryzae (strain KACC10331 / KXO85).